Here is a 640-residue protein sequence, read N- to C-terminus: Threonine--tRNA ligase (640 aa).

Residues 1–61 (MPIITLPNGD…TEDSTLQIIT (61 aa)) enclose the TGS domain. The segment at 242–533 (DHRKIGKALD…LIEHYAGFMP (292 aa)) is catalytic. Cys333, His384, and His510 together coordinate Zn(2+).

Belongs to the class-II aminoacyl-tRNA synthetase family. Homodimer. The cofactor is Zn(2+).

It is found in the cytoplasm. It catalyses the reaction tRNA(Thr) + L-threonine + ATP = L-threonyl-tRNA(Thr) + AMP + diphosphate + H(+). In terms of biological role, catalyzes the attachment of threonine to tRNA(Thr) in a two-step reaction: L-threonine is first activated by ATP to form Thr-AMP and then transferred to the acceptor end of tRNA(Thr). Also edits incorrectly charged L-seryl-tRNA(Thr). In Acinetobacter baumannii (strain AB307-0294), this protein is Threonine--tRNA ligase.